A 359-amino-acid polypeptide reads, in one-letter code: Type-1 angiotensin II receptor B (359 aa).

Over 1–25 the chain is Extracellular; sequence MTLNSSTEDGIKRIQDDCPKAGRHN. Asn-4 is a glycosylation site (N-linked (GlcNAc...) asparagine). 2 residues coordinate angiotensin II: Gln-15 and Asp-17. Cystine bridges form between Cys-18-Cys-274 and Cys-101-Cys-180. Residues 26-55 form a helical membrane-spanning segment; that stretch reads YIFVMIPTLYSIIFVVGIFGNSLVVIVIYF. Residues 56-61 are Cytoplasmic-facing; it reads YMKLKT. A helical transmembrane segment spans residues 62 to 89; the sequence is VASVFLLNLALADLCFLLTLPLWAVYTA. Residues 90–98 are Extracellular-facing; sequence MEYRWPFGN. Residues 99 to 125 form a helical membrane-spanning segment; sequence HLCKIASASVSFNLYASVFLLTCLSID. The Cytoplasmic portion of the chain corresponds to 126–141; it reads RYLAIVHPMKSRLRRT. A helical transmembrane segment spans residues 142–165; that stretch reads MLVAKVTCIIIWLMAGLASLPAVI. At 166–190 the chain is on the extracellular side; the sequence is YRNVYFIENTNITVCAFHYESQNST. Residue Arg-167 participates in angiotensin II binding. Asn-176 is a glycosylation site (N-linked (GlcNAc...) asparagine). Angiotensin II-binding residues include Phe-182, His-183, and Tyr-184. An N-linked (GlcNAc...) asparagine glycan is attached at Asn-188. A helical transmembrane segment spans residues 191–216; the sequence is LPIGLGLTKNILGFVFPFLIILTSYT. Lys-199 is a binding site for angiotensin II. The Cytoplasmic segment spans residues 217 to 239; that stretch reads LIWKALKKAYKIQKNTPRNDDIF. The chain crosses the membrane as a helical span at residues 240-268; the sequence is RIIMAIVLFFFFSWVPHQIFTFLDVLIQL. Residues 269–278 lie on the Extracellular side of the membrane; that stretch reads GIIRDCEIAD. The helical transmembrane segment at 279-304 threads the bilayer; that stretch reads IVDTAMPITICIAYFNNCLNPLFYGF. Residues 305-359 lie on the Cytoplasmic side of the membrane; that stretch reads LGKKFKKYFLQLLKYIPPTAKSHAGLSTKMSTLSYRPSDNMSSSAKKSASFFEVE. The segment at 339-359 is disordered; sequence YRPSDNMSSSAKKSASFFEVE. Residues 346–359 show a composition bias toward low complexity; the sequence is SSSAKKSASFFEVE.

This sequence belongs to the G-protein coupled receptor 1 family. As to quaternary structure, interacts with MAS1. Interacts with ARRB1. Interacts with FLNA (via filamin repeat 21); increases PKA-mediated phosphorylation of FLNA. In terms of processing, C-terminal Ser or Thr residues may be phosphorylated. As to expression, is expressed in the liver, kidney, aorta, lung, uterus, ovary, spleen, heart, and vascular smooth muscle cell. Expressed most abundantly in the adrenal gland.

It localises to the cell membrane. In terms of biological role, receptor for angiotensin II, a vasoconstricting peptide, which acts as a key regulator of blood pressure and sodium retention by the kidney. The activated receptor in turn couples to G-alpha proteins G(q) (GNAQ, GNA11, GNA14 or GNA15) and thus activates phospholipase C and increases the cytosolic Ca(2+) concentrations, which in turn triggers cellular responses such as stimulation of protein kinase C. This Rattus norvegicus (Rat) protein is Type-1 angiotensin II receptor B (Agtr1b).